The following is a 1475-amino-acid chain: Protein Shroom4 (1475 aa).

The PDZ domain maps to 10–92 (YVPVQLQGGA…ILKLIVRRRN (83 aa)). Disordered regions lie at residues 151–175 (EKSS…GHLL) and 202–321 (CALS…PPRS). Over residues 249-258 (TSTSHASSYS) the composition is skewed to polar residues. Over residues 294–312 (EQHRASEPVDSLPQKEKPG) the composition is skewed to basic and acidic residues. Ser-412 bears the Phosphoserine mark. 4 disordered regions span residues 432-523 (SKGM…PSAT), 542-577 (HTEA…NRRR), 610-644 (NEAV…SPGD), and 658-688 (SECL…GQSS). The segment covering 471-485 (QTRKERKTTPLDDKL) has biased composition (basic and acidic residues). Positions 513-523 (SDLTSQQPSAT) are enriched in polar residues. Positions 542 to 557 (HTEASEEGDNEPKECG) are enriched in basic and acidic residues. The span at 558–568 (RLGGRRSGGPR) shows a compositional bias: gly residues. 2 stretches are compositionally biased toward low complexity: residues 624–635 (PLSASNASLLPS) and 658–667 (SECLSQASES). Ser-722 is modified (phosphoserine). Composition is skewed to polar residues over residues 727 to 738 (AQPQVALSTEAP) and 775 to 791 (KSLS…HNNK). 2 disordered regions span residues 727–753 (AQPQ…STPQ) and 772–791 (ESSK…HNNK). Ser-1010 carries the phosphoserine modification. 2 disordered regions span residues 1022 to 1041 (SNKP…ASMP) and 1055 to 1185 (SLEP…QSLQ). Residues 1090–1099 (FPPPRPPPPN) show a composition bias toward pro residues. Positions 1110–1125 (QLQQQQQQQQQQQQQQ) are enriched in low complexity. A compositionally biased stretch (acidic residues) spans 1128-1145 (EEEEEKEQEEEGEKEEDL). Over residues 1149–1168 (YFSSELTGSCAPNTEEQPQS) the composition is skewed to polar residues. In terms of domain architecture, ASD2 spans 1190–1469 (FALHPSNFVP…QLKCLKESLH (280 aa)). Residues 1380-1470 (SESNQEKLVL…LKCLKESLHL (91 aa)) adopt a coiled-coil conformation.

The protein belongs to the shroom family. As to quaternary structure, interacts directly with F-actin. In terms of tissue distribution, detected in most adult tissues examined. Expressed in brain, lung, heart, liver, kidney, muscle and ovary. Expressed throughout the brain, with high expression in the brain stem and cerebellum and weaker expression in the hypothalamus, the hippocampus and the olfactory bulb. Expressed in wide range of cell types during development, including vascular endothelium and the polarized epithelium of the neural tube and kidney.

It is found in the cytoplasm. Its subcellular location is the cytoskeleton. Functionally, probable regulator of cytoskeletal architecture that plays an important role in development. May regulate cellular and cytoskeletal architecture by modulating the spatial distribution of myosin II. The polypeptide is Protein Shroom4 (Shroom4) (Mus musculus (Mouse)).